Reading from the N-terminus, the 395-residue chain is Non-structural protein 1 (395 aa).

The DRBM domain occupies 328–395 (NYIQLLNEHS…AEQMFRHQCF (68 aa)).

The polypeptide is Non-structural protein 1 (Homo sapiens (Human)).